A 76-amino-acid polypeptide reads, in one-letter code: Conotoxin Vc6.6 (76 aa).

A signal peptide spans 1 to 22 (MKLTCMVIVAVLFLTANTFVTA). Residues 23–52 (VPHSSNALENLYLKAHHEMNNPKDSELNKR) constitute a propeptide that is removed on maturation. 3 disulfide bridges follow: cysteine 53/cysteine 67, cysteine 60/cysteine 71, and cysteine 66/cysteine 75.

This sequence belongs to the conotoxin O1 superfamily. In terms of tissue distribution, expressed by the venom duct.

Its subcellular location is the secreted. The chain is Conotoxin Vc6.6 from Conus victoriae (Queen Victoria cone).